The chain runs to 528 residues: Low affinity inorganic phosphate transporter 4 (528 aa).

The Cytoplasmic segment spans residues 1–18; that stretch reads MALEVLEALDSARTQWYH. The chain crosses the membrane as a helical span at residues 19–39; that stretch reads VTAIVIAGMGFFTDAYDLFCI. At 40–68 the chain is on the extracellular side; that stretch reads TTVSKLLGRLYYFDPSTGKPGKLPNNVNN. The chain crosses the membrane as a helical span at residues 69–89; the sequence is LVTGVALVGTLSGQLFFGYLG. Residues 90–96 are Cytoplasmic-facing; the sequence is DKLGRKK. A helical transmembrane segment spans residues 97 to 117; the sequence is VYGVTLILMVACAICSGLSFG. Topologically, residues 118-122 are extracellular; sequence ASAKS. The helical transmembrane segment at 123 to 143 threads the bilayer; it reads VMGTLCFFRFWLGFGIGGDYP. Topologically, residues 144–158 are cytoplasmic; that stretch reads LSATIMSEYANKRTR. Residues 159-179 form a helical membrane-spanning segment; sequence GAFIAAVFAMQGVGIIFAGLV. Over 180-208 the chain is Extracellular; that stretch reads SMCLSAGFKASYHAPSFHDDPIMSTQPQG. A helical transmembrane segment spans residues 209–229; it reads DLMWRLVLMIGAVPAAMTYYW. The Cytoplasmic segment spans residues 230 to 292; that stretch reads RMKMPETGRY…NEFFTRHGRH (63 aa). A helical membrane pass occupies residues 293 to 313; the sequence is LIGTMTSWFLLDIAFYSQNLT. Over 314–341 the chain is Extracellular; that stretch reads QKDIFPAMGLIDKDFEMNAIQEVFETSR. The chain crosses the membrane as a helical span at residues 342-362; that stretch reads AMFVIALFGTFPGYWFTVFFI. The Cytoplasmic segment spans residues 363 to 371; sequence EKLGRYKIQ. A helical membrane pass occupies residues 372-392; the sequence is LIGFFMMSVFMFIIGVKYDYL. The Extracellular segment spans residues 393-401; that stretch reads RNENSHMFA. A helical transmembrane segment spans residues 402–422; it reads LLYGLTFFFANFGPNSTTFVL. Residues 423–433 lie on the Cytoplasmic side of the membrane; it reads PAELFPTRVRS. Residues 434–454 traverse the membrane as a helical segment; that stretch reads TCHALSAAAGKAGAMVGAFGI. Residues 455–467 lie on the Extracellular side of the membrane; sequence QNYTQKGEQKQIK. N-linked (GlcNAc...) asparagine glycosylation is present at Asn-456. A helical transmembrane segment spans residues 468–488; it reads HAMMILAVTNLIGFFCSFLVT. At 489-528 the chain is on the cytoplasmic side; it reads ETKGRSLEEISGEDGRESELTPTPPNNRVPTRQEPRSETM. Basic and acidic residues-rich tracts occupy residues 496-507 and 519-528; these read EEISGEDGRESE and TRQEPRSETM. The disordered stretch occupies residues 496–528; that stretch reads EEISGEDGRESELTPTPPNNRVPTRQEPRSETM.

The protein belongs to the major facilitator superfamily. Phosphate:H(+) symporter (TC 2.A.1.9) family. As to expression, expressed only in mycorrhizal roots, exclusively in cortical cells containing arbuscules, upon arbuscular mycorrhizal (AM) symbiosis with AM fungi (e.g. Gigaspora margarita and Funnelliformis mosseae). Also observed in root tips of non-mycorrhizal roots, in a phosphate (Pi) depended-manner, highest expression levels being observed in low Pi conditions.

It localises to the cell membrane. The catalysed reaction is phosphate(in) + H(+)(in) = phosphate(out) + H(+)(out). Its function is as follows. Low-affinity transporter for external inorganic phosphate (Pi) probably involved in the acquisition of phosphate released by arbuscular mycorrhizal (AM) fungi (e.g. Gigaspora margarita and Funnelliformis mosseae) during AM symbiosis; required for propper mycorrhizal arbuscule morphology. Acts as a Pi-sensing machinery at the root tip level, independently of AM fungi, involved in the regulation of early root branching and lateral roots formation. The polypeptide is Low affinity inorganic phosphate transporter 4 (Lotus japonicus (Lotus corniculatus var. japonicus)).